We begin with the raw amino-acid sequence, 514 residues long: Lysine--tRNA ligase (514 aa).

Over residues 1-13 the composition is skewed to low complexity; the sequence is MSKPNNQNQQNNQ. The tract at residues 1–21 is disordered; the sequence is MSKPNNQNQQNNQEPAPEDAN. Residues glutamate 422 and glutamate 429 each contribute to the Mg(2+) site.

This sequence belongs to the class-II aminoacyl-tRNA synthetase family. As to quaternary structure, homodimer. Mg(2+) serves as cofactor.

It localises to the cytoplasm. The catalysed reaction is tRNA(Lys) + L-lysine + ATP = L-lysyl-tRNA(Lys) + AMP + diphosphate. This Psychrobacter cryohalolentis (strain ATCC BAA-1226 / DSM 17306 / VKM B-2378 / K5) protein is Lysine--tRNA ligase.